The following is a 271-amino-acid chain: Tryptophan synthase alpha chain (271 aa).

Catalysis depends on proton acceptor residues E49 and D60.

Belongs to the TrpA family. In terms of assembly, tetramer of two alpha and two beta chains.

The enzyme catalyses (1S,2R)-1-C-(indol-3-yl)glycerol 3-phosphate + L-serine = D-glyceraldehyde 3-phosphate + L-tryptophan + H2O. The protein operates within amino-acid biosynthesis; L-tryptophan biosynthesis; L-tryptophan from chorismate: step 5/5. Functionally, the alpha subunit is responsible for the aldol cleavage of indoleglycerol phosphate to indole and glyceraldehyde 3-phosphate. The polypeptide is Tryptophan synthase alpha chain (Burkholderia cenocepacia (strain ATCC BAA-245 / DSM 16553 / LMG 16656 / NCTC 13227 / J2315 / CF5610) (Burkholderia cepacia (strain J2315))).